The following is a 126-amino-acid chain: Diadenosine hexaphosphate hydrolase (126 aa).

Residues 1-121 (MELGAGGVVF…EDLGLLEVAL (121 aa)) enclose the Nudix hydrolase domain. Residues 21 to 23 (DRM) and 30 to 32 (KGH) each bind substrate. A Nudix box motif is present at residues 31–52 (GHPEPGESLEEAAVREVWEETG). Residues Glu-46 and Glu-50 each contribute to the Mg(2+) site. Substrate is bound by residues 66–68 (YVN), Arg-74, and Glu-112.

It belongs to the Nudix hydrolase family. Monomer. Requires Mg(2+) as cofactor.

It carries out the reaction P(1),P(6)-bis(5'-adenosyl) hexaphosphate + H2O = 2 ATP + 2 H(+). The catalysed reaction is P(1),P(5)-bis(5'-adenosyl) pentaphosphate + H2O = ADP + ATP + 2 H(+). The enzyme catalyses P(1),P(4)-bis(5'-adenosyl) tetraphosphate + H2O = AMP + ATP + 2 H(+). Its activity is regulated as follows. Strongly inhibited by fluoride ions. Functionally, specifically hydrolyzes (di)adenosine polyphosphates but not ATP or diadenosine triphosphate, generating ATP as the product. Diadenosine hexaphosphate (Ap6A) is the preferred substrate and hydrolysis yields 2 ATP. It is the only enzyme that symmetrically hydrolyzes Ap6A. It also hydrolyzes diadenosine pentaphosphate (Ap5A), diadenosine tetraphosphate (Ap4A) and adenosine tetraphosphate (p4A). The sequence is that of Diadenosine hexaphosphate hydrolase from Thermus thermophilus.